Reading from the N-terminus, the 1216-residue chain is DNA polymerase subunit gamma-1 (1216 aa).

The span at 27–37 (SSSVLDPVPSD) shows a compositional bias: low complexity. Positions 27–50 (SSSVLDPVPSDGQPQSQMPSSENG) are disordered. A compositionally biased stretch (polar residues) spans 38 to 50 (GQPQSQMPSSENG). The Exo I motif lies at 179–183 (VFDVE). Asp181 (exonuclease activity) is an active-site residue. The Exo II motif lies at 250-258 (VGHNVSFDR). Residue Ser289 participates in DNA binding. Residues 301–314 (GKHKTQHPTKRGQK) are compositionally biased toward basic residues. Residues 301 to 321 (GKHKTQHPTKRGQKSQKNANG) form a disordered region. Residues 377–385 (YCARDVWAT) carry the Exo III motif. Residues 488–518 (TASASKLPIEGAGPFGDPMDQEDPGPPSEEE) form a disordered region. The segment at 491–552 (ASKLPIEGAG…RPQHLPGHPG (62 aa)) is accessory-interacting determinant. A compositionally biased stretch (acidic residues) spans 506 to 518 (MDQEDPGPPSEEE). Arg560 contacts RNA. Ser574 is a DNA binding site. Positions 731, 740, and 745 each coordinate RNA. Residues Lys783 and Thr826 each contribute to the DNA site. The segment at 835 to 841 (TWLTASN) is trigger loop. Ser840 and Arg846 together coordinate RNA. A Pol A motif is present at residues 864 to 873 (VGADVDSQEL). The a 2'-deoxyribonucleoside 5'-triphosphate site is built by Asp867, Val868, Ser870, Glu872, Arg920, Lys924, and Tyr928. Mg(2+) is bound by residues Asp867 and Val868. The Pol B signature appears at 920-935 (REHAKVFNYGRIYGAG). Positions 1071 and 1072 each coordinate DNA. A Pol C motif is present at residues 1111 to 1118 (HDEVRYLV). Residue Asp1112 coordinates a 2'-deoxyribonucleoside 5'-triphosphate. Asp1112 is a Mg(2+) binding site.

Belongs to the DNA polymerase type-A family. In terms of assembly, heterotrimer composed of a catalytic subunit and a homodimer of accessory subunits (POLG:POLG2). Interacts with TTC3. Interacts with LIG3. Mg(2+) is required as a cofactor.

It localises to the mitochondrion. Its subcellular location is the mitochondrion matrix. The protein localises to the mitochondrion nucleoid. The enzyme catalyses DNA(n) + a 2'-deoxyribonucleoside 5'-triphosphate = DNA(n+1) + diphosphate. It carries out the reaction a 3'-end 2'-deoxyribonucleotidyl-deoxyribonucleotide-DNA + H2O = a 3'-end 2'-deoxyribonucleotide-DNA + a 2'-deoxyribonucleoside 5'-phosphate + H(+). It catalyses the reaction a 5'-end 2'-deoxyribose-2'-deoxyribonucleotide-DNA = (2E,4S)-4-hydroxypenten-2-al-5-phosphate + a 5'-end 5'-phospho-2'-deoxyribonucleoside-DNA + H(+). Inhibited by dideoxynucleotides such as antiviral agent zalcitabine. Its function is as follows. Catalytic subunit of DNA polymerase gamma solely responsible for replication of mitochondrial DNA (mtDNA). Replicates both heavy and light strands of the circular mtDNA genome using a single-stranded DNA template, RNA primers and the four deoxyribonucleoside triphosphates as substrates. Has 5' -&gt; 3' polymerase activity. Functionally interacts with TWNK and SSBP1 at the replication fork to form a highly processive replisome, where TWNK unwinds the double-stranded DNA template prior to replication and SSBP1 covers the parental heavy strand to enable continuous replication of the entire mitochondrial genome. A single nucleotide incorporation cycle includes binding of the incoming nucleotide at the insertion site, a phosphodiester bond formation reaction that extends the 3'-end of the primer DNA, and translocation of the primer terminus to the post-insertion site. After completing replication of a mtDNA strand, mediates 3' -&gt; 5' exonucleolytic degradation at the nick to enable proper ligation. Highly accurate due to high nucleotide selectivity and 3' -&gt; 5' exonucleolytic proofreading. Proficiently corrects base substitutions, single-base additions and deletions in non-repetitive sequences and short repeats, but displays lower proofreading activity when replicating longer homopolymeric stretches. Exerts exonuclease activity toward single-stranded DNA and double-stranded DNA containing 3'-terminal mispairs. When a misincorporation occurs, transitions from replication to a pro-nucleolytic editing mode and removes the missincorporated nucleoside in the exonuclease active site. Proceeds via an SN2 nucleolytic mechanism in which Asp-198 catalyzes phosphodiester bond hydrolysis and Glu-200 stabilizes the leaving group. As a result the primer strand becomes one nucleotide shorter and is positioned in the post-insertion site, ready to resume DNA synthesis. Exerts 5'-deoxyribose phosphate (dRP) lyase activity and mediates repair-associated mtDNA synthesis (gap filling) in base-excision repair pathway. Catalyzes the release of the 5'-terminal 2-deoxyribose-5-phosphate sugar moiety from incised apurinic/apyrimidinic (AP) sites to produce a substrate for DNA ligase. The dRP lyase reaction does not require divalent metal ions and likely proceeds via a Schiff base intermediate in a beta-elimination reaction mechanism. The protein is DNA polymerase subunit gamma-1 of Rattus norvegicus (Rat).